The primary structure comprises 133 residues: Large-conductance mechanosensitive channel (133 aa).

2 helical membrane-spanning segments follow: residues 14-34 (VVDL…VSSL) and 67-87 (GNFI…FMFV).

It belongs to the MscL family. Homopentamer.

It is found in the cell membrane. Its function is as follows. Channel that opens in response to stretch forces in the membrane lipid bilayer. May participate in the regulation of osmotic pressure changes within the cell. This is Large-conductance mechanosensitive channel from Bacillus cereus (strain AH187).